A 156-amino-acid polypeptide reads, in one-letter code: Transcription antitermination protein NusB (156 aa).

It belongs to the NusB family.

In terms of biological role, involved in transcription antitermination. Required for transcription of ribosomal RNA (rRNA) genes. Binds specifically to the boxA antiterminator sequence of the ribosomal RNA (rrn) operons. The sequence is that of Transcription antitermination protein NusB from Rickettsia rickettsii (strain Iowa).